The primary structure comprises 373 residues: Transaldolase (373 aa).

Lysine 143 (schiff-base intermediate with substrate) is an active-site residue.

Belongs to the transaldolase family. Type 2 subfamily.

The protein resides in the cytoplasm. The enzyme catalyses D-sedoheptulose 7-phosphate + D-glyceraldehyde 3-phosphate = D-erythrose 4-phosphate + beta-D-fructose 6-phosphate. It functions in the pathway carbohydrate degradation; pentose phosphate pathway; D-glyceraldehyde 3-phosphate and beta-D-fructose 6-phosphate from D-ribose 5-phosphate and D-xylulose 5-phosphate (non-oxidative stage): step 2/3. In terms of biological role, transaldolase is important for the balance of metabolites in the pentose-phosphate pathway. The polypeptide is Transaldolase (tal) (Mycobacterium bovis (strain ATCC BAA-935 / AF2122/97)).